Reading from the N-terminus, the 38-residue chain is Large ribosomal subunit protein bL36 (38 aa).

It belongs to the bacterial ribosomal protein bL36 family.

The sequence is that of Large ribosomal subunit protein bL36 from Prochlorococcus marinus (strain MIT 9312).